We begin with the raw amino-acid sequence, 866 residues long: Probable beta-glucosidase F (866 aa).

The signal sequence occupies residues 1–20 (MAAFPAYLALLSYLVPGALS). Residues Asn65, Asn73, and Asn257 are each glycosylated (N-linked (GlcNAc...) asparagine). Asp285 is an active-site residue. 8 N-linked (GlcNAc...) asparagine glycosylation sites follow: Asn328, Asn360, Asn395, Asn421, Asn474, Asn659, Asn664, and Asn724. The tract at residues 725 to 748 (SSKTYPYPDGYTTEPKPAPRAGGA) is disordered.

The protein belongs to the glycosyl hydrolase 3 family.

The protein localises to the secreted. The catalysed reaction is Hydrolysis of terminal, non-reducing beta-D-glucosyl residues with release of beta-D-glucose.. It functions in the pathway glycan metabolism; cellulose degradation. Beta-glucosidases are one of a number of cellulolytic enzymes involved in the degradation of cellulosic biomass. Catalyzes the last step releasing glucose from the inhibitory cellobiose. The chain is Probable beta-glucosidase F (bglF) from Aspergillus flavus (strain ATCC 200026 / FGSC A1120 / IAM 13836 / NRRL 3357 / JCM 12722 / SRRC 167).